We begin with the raw amino-acid sequence, 487 residues long: UPF0324 membrane protein NE0724 (487 aa).

11 consecutive transmembrane segments (helical) span residues 19–38 (WAVWLGLIMFMASVSSLWGW), 71–93 (PALSLLVTYLVFTALTCLAAWSM), 100–119 (FFIGWTILFIMTWVIWIIGN), 139–161 (LSLGSGFSYLLALLVGLVIGNFF), 181–200 (AIVFLGIKIGVMSIEAAGFI), 204–226 (VMTGVAATFVAYMLFWPIVYALG), 269–291 (VSILVVIFAMFELIILPGFYTAI), 350–369 (IWIDMFIGVWAFVLALVWVY), 389–411 (FPKFVLGYLLVWFSYIMLASSGS), 426–443 (GPMRNMMFMLTFISIGII), and 456–478 (ALLYAIALFGIIAPIAYGVAWIF).

This sequence belongs to the UPF0324 family.

It localises to the cell membrane. The polypeptide is UPF0324 membrane protein NE0724 (Nitrosomonas europaea (strain ATCC 19718 / CIP 103999 / KCTC 2705 / NBRC 14298)).